The primary structure comprises 512 residues: Lysine--tRNA ligase (512 aa).

The Mg(2+) site is built by Glu-408 and Glu-415.

The protein belongs to the class-II aminoacyl-tRNA synthetase family. Homodimer. Mg(2+) is required as a cofactor.

The protein resides in the cytoplasm. It catalyses the reaction tRNA(Lys) + L-lysine + ATP = L-lysyl-tRNA(Lys) + AMP + diphosphate. This is Lysine--tRNA ligase from Prochlorococcus marinus subsp. pastoris (strain CCMP1986 / NIES-2087 / MED4).